A 211-amino-acid polypeptide reads, in one-letter code: Thiamine-phosphate synthase (211 aa).

Residues 37-41 (QLRIK) and N69 each bind 4-amino-2-methyl-5-(diphosphooxymethyl)pyrimidine. The Mg(2+) site is built by D70 and D89. Residue S108 participates in 4-amino-2-methyl-5-(diphosphooxymethyl)pyrimidine binding. 134–136 (TQT) is a 2-[(2R,5Z)-2-carboxy-4-methylthiazol-5(2H)-ylidene]ethyl phosphate binding site. Position 137 (K137) interacts with 4-amino-2-methyl-5-(diphosphooxymethyl)pyrimidine. 2-[(2R,5Z)-2-carboxy-4-methylthiazol-5(2H)-ylidene]ethyl phosphate-binding positions include G166 and 186-187 (VS).

This sequence belongs to the thiamine-phosphate synthase family. Mg(2+) serves as cofactor.

It carries out the reaction 2-[(2R,5Z)-2-carboxy-4-methylthiazol-5(2H)-ylidene]ethyl phosphate + 4-amino-2-methyl-5-(diphosphooxymethyl)pyrimidine + 2 H(+) = thiamine phosphate + CO2 + diphosphate. The catalysed reaction is 2-(2-carboxy-4-methylthiazol-5-yl)ethyl phosphate + 4-amino-2-methyl-5-(diphosphooxymethyl)pyrimidine + 2 H(+) = thiamine phosphate + CO2 + diphosphate. The enzyme catalyses 4-methyl-5-(2-phosphooxyethyl)-thiazole + 4-amino-2-methyl-5-(diphosphooxymethyl)pyrimidine + H(+) = thiamine phosphate + diphosphate. Its pathway is cofactor biosynthesis; thiamine diphosphate biosynthesis; thiamine phosphate from 4-amino-2-methyl-5-diphosphomethylpyrimidine and 4-methyl-5-(2-phosphoethyl)-thiazole: step 1/1. Condenses 4-methyl-5-(beta-hydroxyethyl)thiazole monophosphate (THZ-P) and 2-methyl-4-amino-5-hydroxymethyl pyrimidine pyrophosphate (HMP-PP) to form thiamine monophosphate (TMP). The chain is Thiamine-phosphate synthase from Escherichia coli O9:H4 (strain HS).